A 197-amino-acid chain; its full sequence is Na(+)-translocating NADH-quinone reductase subunit E (197 aa).

6 helical membrane passes run 11–31 (SVFI…FLAV), 35–55 (VSTA…SVPA), 76–96 (FLKF…LEMF), 108–128 (LGIY…VSFM), 139–159 (VVYG…LAGI), and 175–195 (LGIT…FSGI).

Belongs to the NqrDE/RnfAE family. As to quaternary structure, composed of six subunits; NqrA, NqrB, NqrC, NqrD, NqrE and NqrF.

It localises to the cell inner membrane. It carries out the reaction a ubiquinone + n Na(+)(in) + NADH + H(+) = a ubiquinol + n Na(+)(out) + NAD(+). NQR complex catalyzes the reduction of ubiquinone-1 to ubiquinol by two successive reactions, coupled with the transport of Na(+) ions from the cytoplasm to the periplasm. NqrA to NqrE are probably involved in the second step, the conversion of ubisemiquinone to ubiquinol. This Neisseria meningitidis serogroup A / serotype 4A (strain DSM 15465 / Z2491) protein is Na(+)-translocating NADH-quinone reductase subunit E.